Consider the following 279-residue polypeptide: Mirror-image polydactyly gene 1 protein homolog (279 aa).

Residues 1-11 show a composition bias toward basic and acidic residues; it reads MNSEQSIRELG. The segment at 1-21 is disordered; it reads MNSEQSIRELGNEVPSEDLEL. Coiled coils occupy residues 65-169 and 218-255; these read LNKE…MLEN and AEEM…STNN. The disordered stretch occupies residues 247 to 268; the sequence is KQNQTSTNNTKHPTAKNNQEHT. The segment covering 248 to 263 has biased composition (polar residues); it reads QNQTSTNNTKHPTAKN.

The chain is Mirror-image polydactyly gene 1 protein homolog (Mipol1) from Mus musculus (Mouse).